The following is a 279-amino-acid chain: Hydroxyethylthiazole kinase (279 aa).

Met-58 provides a ligand contact to substrate. Residues Lys-134 and Thr-180 each contribute to the ATP site. Gly-207 serves as a coordination point for substrate.

This sequence belongs to the Thz kinase family. It depends on Mg(2+) as a cofactor.

The enzyme catalyses 5-(2-hydroxyethyl)-4-methylthiazole + ATP = 4-methyl-5-(2-phosphooxyethyl)-thiazole + ADP + H(+). It functions in the pathway cofactor biosynthesis; thiamine diphosphate biosynthesis; 4-methyl-5-(2-phosphoethyl)-thiazole from 5-(2-hydroxyethyl)-4-methylthiazole: step 1/1. In terms of biological role, catalyzes the phosphorylation of the hydroxyl group of 4-methyl-5-beta-hydroxyethylthiazole (THZ). This chain is Hydroxyethylthiazole kinase, found in Methanoculleus marisnigri (strain ATCC 35101 / DSM 1498 / JR1).